The chain runs to 353 residues: 3-dehydroquinate synthase (353 aa).

Residues 62-67 (DGEQYK), 96-100 (GVIGD), 120-121 (TT), K133, and K142 contribute to the NAD(+) site. Positions 175, 236, and 253 each coordinate Zn(2+).

It belongs to the sugar phosphate cyclases superfamily. Dehydroquinate synthase family. Requires NAD(+) as cofactor. Co(2+) serves as cofactor. Zn(2+) is required as a cofactor.

The protein localises to the cytoplasm. It catalyses the reaction 7-phospho-2-dehydro-3-deoxy-D-arabino-heptonate = 3-dehydroquinate + phosphate. It participates in metabolic intermediate biosynthesis; chorismate biosynthesis; chorismate from D-erythrose 4-phosphate and phosphoenolpyruvate: step 2/7. Its function is as follows. Catalyzes the conversion of 3-deoxy-D-arabino-heptulosonate 7-phosphate (DAHP) to dehydroquinate (DHQ). The chain is 3-dehydroquinate synthase from Helicobacter hepaticus (strain ATCC 51449 / 3B1).